The following is a 751-amino-acid chain: Cellulose synthase-like protein G3 (751 aa).

The next 2 membrane-spanning stretches (helical) occupy residues 47 to 67 (IYAVFHTCGIIALMYHHVHSL) and 72 to 92 (TTLITSLLLLSDIVLAFMWAT). Active-site residues include aspartate 161 and aspartate 466. The next 6 helical transmembrane spans lie at 543–563 (CWAFWSLPLIVYGFLPQLALL), 577–597 (FWLYIVLFLGAYGQDLLDFVL), 617–639 (FSSHLFGFIEFTLKTLNLSTHGF), 674–694 (TVAIVNLLAFVWGLYGLFAWG), 697–717 (LVLELMLASFAVVNCLPIYEA), and 731–751 (VCFVAGILTFVLIVSGYVFLK).

This sequence belongs to the glycosyltransferase 2 family. Plant cellulose synthase-like G subfamily.

Its subcellular location is the golgi apparatus membrane. Functionally, thought to be a Golgi-localized beta-glycan synthase that polymerize the backbones of noncellulosic polysaccharides (hemicelluloses) of plant cell wall. The polypeptide is Cellulose synthase-like protein G3 (CSLG3) (Arabidopsis thaliana (Mouse-ear cress)).